Here is a 229-residue protein sequence, read N- to C-terminus: PKHD-type hydroxylase BBta_1313 (229 aa).

In terms of domain architecture, Fe2OG dioxygenase spans 78–180; the sequence is HIFPPLFNRY…RIASFFWLQS (103 aa). 3 residues coordinate Fe cation: histidine 98, aspartate 100, and histidine 161. A 2-oxoglutarate-binding site is contributed by arginine 171.

The cofactor is Fe(2+). L-ascorbate serves as cofactor.

The chain is PKHD-type hydroxylase BBta_1313 from Bradyrhizobium sp. (strain BTAi1 / ATCC BAA-1182).